The sequence spans 403 residues: Serine/threonine-protein phosphatase 4 regulatory subunit 2-A (403 aa).

Composition is skewed to polar residues over residues Glu140–Arg149, Pro156–Gly170, and Ser183–Ser196. The disordered stretch occupies residues Glu140–Asp403. Over residues Thr197–Gln211 the composition is skewed to basic and acidic residues. Composition is skewed to polar residues over residues Ser212–Ser226 and Ala371–Glu387. Residues Asn388–Asp403 show a composition bias toward acidic residues.

Belongs to the PPP4R2 family. In terms of assembly, serine/threonine-protein phosphatase 4 (PP4) occurs in different assemblies of the catalytic and one or more regulatory subunits.

Functionally, regulatory subunit of serine/threonine-protein phosphatase 4 (PP4). This is Serine/threonine-protein phosphatase 4 regulatory subunit 2-A (ppp4r2-a) from Xenopus laevis (African clawed frog).